The following is a 786-amino-acid chain: DNA repair and recombination protein RAD54-like (786 aa).

Positions 2–9 are required for chromatin remodeling, strand pairing activities and coupling of ATPase activity; it reads RRSLAPSQ. T22 is subject to Phosphothreonine. Residues 165-340 form the Helicase ATP-binding domain; that stretch reads EGKRGSFNGC…FSLVNFVNPE (176 aa). 178–185 is a binding site for ATP; sequence DEMGLGKT. The DEGH box motif lies at 291–294; that stretch reads DEGH. Positions 497-654 constitute a Helicase C-terminal domain; that stretch reads LLDFMLAAIR…NNESVEKHFT (158 aa). Residues 738 to 786 are disordered; sequence EAKPAATTTDEDEELSDSKRKAKKTLASDDDDDEDFVLNCSSGEEFSGF. Residues 776–786 show a composition bias toward polar residues; sequence NCSSGEEFSGF.

The protein belongs to the SNF2/RAD54 helicase family. In terms of assembly, interacts (via N-terminus) with spn-A/Rad51.

The protein resides in the nucleus. In terms of biological role, involved in mitotic DNA repair and meiotic recombination. Functions in the recombinational DNA repair pathway. Essential for interhomolog gene conversion (GC), but may have a less important role in intersister GC than spn-A/Rad51. In the presence of DNA, spn-A/Rad51 enhances the ATPase activity of okr/Rad54. The sequence is that of DNA repair and recombination protein RAD54-like from Drosophila grimshawi (Hawaiian fruit fly).